A 484-amino-acid chain; its full sequence is 1,3-beta-glucanosyltransferase GAS5 (484 aa).

A signal peptide spans 1-19; the sequence is MLLRSLTSAFVLSAGLAQA. 2 N-linked (GlcNAc...) asparagine glycosylation sites follow: N24 and N60. A disulfide bridge connects residues C71 and C100. (1,3-beta-D-glucosyl)n-binding residues include Y89, N159, and E160. Residue E160 is the Proton donor of the active site. An N-linked (GlcNAc...) asparagine glycan is attached at N166. (1,3-beta-D-glucosyl)n-binding residues include D201 and R206. Cystine bridges form between C215/C348 and C234/C265. Residue E262 is the Nucleophile of the active site. Residue Y295 participates in (1,3-beta-D-glucosyl)n binding. N-linked (GlcNAc...) asparagine glycans are attached at residues N299, N344, and N359. The interval 383-462 is disordered; it reads TGIATQQSCD…SSQSSSKSKG (80 aa). The span at 394-404 shows a compositional bias: acidic residues; it reads KDDDDEEDDDT. Positions 405–462 are enriched in low complexity; that stretch reads SSSSSSSSSSSSSASSSSESSSSTSKASSSSPSASETSLLKSAASATSSSQSSSKSKG. G462 is lipidated: GPI-anchor amidated glycine. The propeptide at 463–484 is removed in mature form; that stretch reads AAGIIEIPLIFRALAELYNLVL.

It belongs to the glycosyl hydrolase 72 family. The GPI-anchor is attached to the protein in the endoplasmic reticulum and serves to target the protein to the cell surface. There, the glucosamine-inositol phospholipid moiety is cleaved off and the GPI-modified mannoprotein is covalently attached via its lipidless GPI glycan remnant to the 1,6-beta-glucan of the outer cell wall layer.

It localises to the secreted. Its subcellular location is the cell wall. The protein localises to the membrane. In terms of biological role, splits internally a 1,3-beta-glucan molecule and transfers the newly generated reducing end (the donor) to the non-reducing end of another 1,3-beta-glucan molecule (the acceptor) forming a 1,3-beta linkage, resulting in the elongation of 1,3-beta-glucan chains in the cell wall. Involved in cell wall biosynthesis and morphogenesis. In Saccharomyces cerevisiae (strain ATCC 204508 / S288c) (Baker's yeast), this protein is 1,3-beta-glucanosyltransferase GAS5 (GAS5).